A 175-amino-acid chain; its full sequence is DPY30 domain-containing protein 1 (175 aa).

Residues 94–112 (QQKEKQKSEDFETGQEKSF) are compositionally biased toward basic and acidic residues. Disordered regions lie at residues 94–134 (QQKE…QAEE) and 152–175 (APNL…SAPP).

It belongs to the dpy-30 family. As to quaternary structure, component of the axonemal radial spoke complex 1 (RS1), at least composed of spoke head proteins RSPH1, RSPH3, RSPH9 and the cilia-specific component RSPH4A or sperm-specific component RSPH6A, spoke stalk proteins RSPH14, DNAJB13, DYDC1, ROPN1L and NME5, and the anchor protein IQUB. Interacts with SH3GL3.

The protein resides in the cytoplasm. It is found in the cytoskeleton. Its subcellular location is the flagellum axoneme. Functions as part of axonemal radial spoke complexes that play an important part in the motility of sperm and cilia. Plays a crucial role during acrosome biogenesis. The sequence is that of DPY30 domain-containing protein 1 (Dydc1) from Mus musculus (Mouse).